A 225-amino-acid polypeptide reads, in one-letter code: Ribonuclease 3 (225 aa).

The region spanning 7-129 (LPRLGRILGY…IIGAIYLDAD (123 aa)) is the RNase III domain. Mg(2+) is bound at residue E42. D46 is a catalytic residue. Residues D115 and E118 each coordinate Mg(2+). E118 is a catalytic residue. A DRBM domain is found at 155–225 (DPKTLLQEHL…AAEVLERIKK (71 aa)).

This sequence belongs to the ribonuclease III family. As to quaternary structure, homodimer. Mg(2+) serves as cofactor.

The protein localises to the cytoplasm. The enzyme catalyses Endonucleolytic cleavage to 5'-phosphomonoester.. Functionally, digests double-stranded RNA. Involved in the processing of primary rRNA transcript to yield the immediate precursors to the large and small rRNAs (23S and 16S). Processes some mRNAs, and tRNAs when they are encoded in the rRNA operon. Processes pre-crRNA and tracrRNA of type II CRISPR loci if present in the organism. The sequence is that of Ribonuclease 3 from Shewanella loihica (strain ATCC BAA-1088 / PV-4).